Consider the following 509-residue polypeptide: Photosystem II CP47 reaction center protein (509 aa).

A run of 6 helical transmembrane segments spans residues alanine 21–serine 36, isoleucine 101–tryptophan 115, glycine 140–phenylalanine 156, isoleucine 203–threonine 218, valine 237–threonine 252, and asparagine 457–arginine 472.

It belongs to the PsbB/PsbC family. PsbB subfamily. In terms of assembly, PSII is composed of 1 copy each of membrane proteins PsbA, PsbB, PsbC, PsbD, PsbE, PsbF, PsbH, PsbI, PsbJ, PsbK, PsbL, PsbM, PsbT, PsbX, PsbY, PsbZ, Psb30/Ycf12, at least 3 peripheral proteins of the oxygen-evolving complex and a large number of cofactors. It forms dimeric complexes. The cofactor is Binds multiple chlorophylls. PSII binds additional chlorophylls, carotenoids and specific lipids..

The protein localises to the plastid. It is found in the chloroplast thylakoid membrane. Its function is as follows. One of the components of the core complex of photosystem II (PSII). It binds chlorophyll and helps catalyze the primary light-induced photochemical processes of PSII. PSII is a light-driven water:plastoquinone oxidoreductase, using light energy to abstract electrons from H(2)O, generating O(2) and a proton gradient subsequently used for ATP formation. In Pyropia yezoensis (Susabi-nori), this protein is Photosystem II CP47 reaction center protein.